A 292-amino-acid chain; its full sequence is Protease HtpX homolog (292 aa).

2 consecutive transmembrane segments (helical) span residues 4 to 24 (IFLFIVTNLAILVMLSITLRL) and 42 to 62 (ALLVLSAVIGFGGSLISLAMS). H147 contacts Zn(2+). E148 is an active-site residue. H151 provides a ligand contact to Zn(2+). 2 consecutive transmembrane segments (helical) span residues 158-178 (VTLALIQGVVNTFVIFLSRII) and 198-218 (FVTSLVAQLVLGILATIIVMW). E224 contacts Zn(2+).

It belongs to the peptidase M48B family. Zn(2+) serves as cofactor.

The protein localises to the cell inner membrane. The polypeptide is Protease HtpX homolog (Nitrosomonas eutropha (strain DSM 101675 / C91 / Nm57)).